A 225-amino-acid polypeptide reads, in one-letter code: Probable CDP-diacylglycerol--inositol 3-phosphatidyltransferase 2 (225 aa).

2 helical membrane-spanning segments follow: residues 6–26 and 29–49; these read PATLSVYLYIPNIVGYMRVLL and IAFSVCFSNKTLFSLLYFFSF. D52 and D55 together coordinate Mg(2+). A CDP-1,2-diacyl-sn-glycerol is bound by residues G56, R60, and S66. Residues D73 and D77 each coordinate Mg(2+). The active-site Proton acceptor is the D77. The next 3 membrane-spanning stretches (helical) occupy residues 84–104, 143–163, and 184–204; these read LLVILSQIYRPSLVFLSLLAL, MFMGYCCVSCEVLYIILLLIA, and LSLLLALSIFGWSIKQIINVI.

It belongs to the CDP-alcohol phosphatidyltransferase class-I family. Mg(2+) serves as cofactor. The cofactor is Mn(2+).

The protein localises to the membrane. It catalyses the reaction a CDP-1,2-diacyl-sn-glycerol + myo-inositol = a 1,2-diacyl-sn-glycero-3-phospho-(1D-myo-inositol) + CMP + H(+). In terms of biological role, catalyzes the biosynthesis of phosphatidylinositol (PtdIns) as well as PtdIns:inositol exchange reaction. May thus act to reduce an excessive cellular PtdIns content. The exchange activity is due to the reverse reaction of PtdIns synthase and is dependent on CMP, which is tightly bound to the enzyme. The polypeptide is Probable CDP-diacylglycerol--inositol 3-phosphatidyltransferase 2 (PIS2) (Arabidopsis thaliana (Mouse-ear cress)).